Consider the following 286-residue polypeptide: MNKILLKTTIIFTALFSLNVVASPLDWQKVKRPIPSEDGKASPIGSYTNGCIIGAQALPPKGEGYQVIRMNRNRYYGHPNMIQYLERLGQRAKAAGLPTMLVGDIAMPGGGRFLTGHASHQMGLDADIWLRMGEMSDADALNSDGKGLLVVDRKAQRVDERVWNSNHATLIKLAAQDPNVTRIFVNPAIKVKLCQTAGNDRGWLHKIRPWHGHNSHFHVRLTCPADASYCENQAPVPAGDGCGDELYSWFEPPKPGTSVSKPKVTPPEPFLCQQILNSPNRREWLE.

A signal peptide spans 1-22 (MNKILLKTTIIFTALFSLNVVA). Residues histidine 117, histidine 120, aspartate 127, aspartate 152, and histidine 218 each coordinate Zn(2+).

This sequence belongs to the peptidase M74 family. It depends on Zn(2+) as a cofactor.

Its subcellular location is the periplasm. Murein endopeptidase that cleaves the D-alanyl-meso-2,6-diamino-pimelyl amide bond that connects peptidoglycan strands. Likely plays a role in the removal of murein from the sacculus. The chain is Penicillin-insensitive murein endopeptidase (mepA) from Haemophilus influenzae (strain ATCC 51907 / DSM 11121 / KW20 / Rd).